The primary structure comprises 383 residues: S-adenosylmethionine synthase (383 aa).

Residue histidine 15 participates in ATP binding. A Mg(2+)-binding site is contributed by aspartate 17. K(+) is bound at residue glutamate 43. 2 residues coordinate L-methionine: glutamate 56 and glutamine 99. Residues 99–109 (QSPDINQGVDR) form a flexible loop region. ATP-binding positions include 164–166 (DAK), 230–231 (RF), aspartate 239, 245–246 (RK), alanine 262, and lysine 266. Aspartate 239 lines the L-methionine pocket. An L-methionine-binding site is contributed by lysine 270.

Belongs to the AdoMet synthase family. As to quaternary structure, homotetramer; dimer of dimers. Requires Mg(2+) as cofactor. It depends on K(+) as a cofactor.

The protein resides in the cytoplasm. The enzyme catalyses L-methionine + ATP + H2O = S-adenosyl-L-methionine + phosphate + diphosphate. Its pathway is amino-acid biosynthesis; S-adenosyl-L-methionine biosynthesis; S-adenosyl-L-methionine from L-methionine: step 1/1. Its function is as follows. Catalyzes the formation of S-adenosylmethionine (AdoMet) from methionine and ATP. The overall synthetic reaction is composed of two sequential steps, AdoMet formation and the subsequent tripolyphosphate hydrolysis which occurs prior to release of AdoMet from the enzyme. The polypeptide is S-adenosylmethionine synthase (Shewanella oneidensis (strain ATCC 700550 / JCM 31522 / CIP 106686 / LMG 19005 / NCIMB 14063 / MR-1)).